A 378-amino-acid chain; its full sequence is C-C chemokine receptor type 7 (378 aa).

The signal sequence occupies residues 1-24 (MDPGKPRKNVLVVALLVIFQVCFC). The Extracellular portion of the chain corresponds to 25 to 59 (QDEVTDDYIGENTTVDYTLYESVCFKKDVRNFKAW). Asn36 carries an N-linked (GlcNAc...) asparagine glycan. The helical transmembrane segment at 60 to 86 (FLPLMYSVICFVGLLGNGLVILTYIYF) threads the bilayer. Over 87–95 (KRLKTMTDT) the chain is Cytoplasmic. Residues 96-116 (YLLNLAVADILFLLILPFWAY) traverse the membrane as a helical segment. The Extracellular portion of the chain corresponds to 117–130 (SEAKSWIFGVYLCK). A disulfide bridge connects residues Cys129 and Cys210. A helical transmembrane segment spans residues 131–152 (GIFGIYKLSFFSGMLLLLCISI). Topologically, residues 153 to 170 (DRYVAIVQAVSAHRHRAR) are cytoplasmic. Residues 171–191 (VLLISKLSCVGIWMLALFLSI) traverse the membrane as a helical segment. The Extracellular portion of the chain corresponds to 192–219 (PELLYSGLQKNSGEDTLRCSLVSAQVEA). The chain crosses the membrane as a helical span at residues 220–247 (LITIQVAQMVFGFLVPMLAMSFCYLIII). Over 248–263 (RTLLQARNFERNKAIK) the chain is Cytoplasmic. The chain crosses the membrane as a helical span at residues 264 to 289 (VIIAVVVVFIVFQLPYNGVVLAQTVA). The Extracellular portion of the chain corresponds to 290–313 (NFNITNSSCETSKQLNIAYDVTYS). A helical membrane pass occupies residues 314-331 (LASVRCCVNPFLYAFIGV). Over 332-378 (KFRSDLFKLFKDLGCLSQERLRHWSSCRHVRNASVSMEAETTTTFSP) the chain is Cytoplasmic.

Belongs to the G-protein coupled receptor 1 family.

It is found in the cell membrane. Receptor for the MIP-3-beta chemokine. This is C-C chemokine receptor type 7 (Ccr7) from Mus musculus (Mouse).